A 365-amino-acid polypeptide reads, in one-letter code: 2-aminoethylphosphonate--pyruvate transaminase (365 aa).

The residue at position 194 (Lys194) is an N6-(pyridoxal phosphate)lysine.

It belongs to the class-V pyridoxal-phosphate-dependent aminotransferase family. PhnW subfamily. As to quaternary structure, homodimer. It depends on pyridoxal 5'-phosphate as a cofactor.

It catalyses the reaction (2-aminoethyl)phosphonate + pyruvate = phosphonoacetaldehyde + L-alanine. Involved in phosphonate degradation. This Bacillus cereus (strain 03BB102) protein is 2-aminoethylphosphonate--pyruvate transaminase.